We begin with the raw amino-acid sequence, 393 residues long: NAD(P)H-quinone oxidoreductase subunit H, chloroplastic (393 aa).

The protein belongs to the complex I 49 kDa subunit family. NDH is composed of at least 16 different subunits, 5 of which are encoded in the nucleus.

It is found in the plastid. The protein resides in the chloroplast thylakoid membrane. The catalysed reaction is a plastoquinone + NADH + (n+1) H(+)(in) = a plastoquinol + NAD(+) + n H(+)(out). It catalyses the reaction a plastoquinone + NADPH + (n+1) H(+)(in) = a plastoquinol + NADP(+) + n H(+)(out). Its function is as follows. NDH shuttles electrons from NAD(P)H:plastoquinone, via FMN and iron-sulfur (Fe-S) centers, to quinones in the photosynthetic chain and possibly in a chloroplast respiratory chain. The immediate electron acceptor for the enzyme in this species is believed to be plastoquinone. Couples the redox reaction to proton translocation, and thus conserves the redox energy in a proton gradient. In Gossypium hirsutum (Upland cotton), this protein is NAD(P)H-quinone oxidoreductase subunit H, chloroplastic.